Consider the following 94-residue polypeptide: Pyrimidine/purine nucleoside phosphorylase (94 aa).

This sequence belongs to the nucleoside phosphorylase PpnP family.

It carries out the reaction a purine D-ribonucleoside + phosphate = a purine nucleobase + alpha-D-ribose 1-phosphate. The enzyme catalyses adenosine + phosphate = alpha-D-ribose 1-phosphate + adenine. The catalysed reaction is cytidine + phosphate = cytosine + alpha-D-ribose 1-phosphate. It catalyses the reaction guanosine + phosphate = alpha-D-ribose 1-phosphate + guanine. It carries out the reaction inosine + phosphate = alpha-D-ribose 1-phosphate + hypoxanthine. The enzyme catalyses thymidine + phosphate = 2-deoxy-alpha-D-ribose 1-phosphate + thymine. The catalysed reaction is uridine + phosphate = alpha-D-ribose 1-phosphate + uracil. It catalyses the reaction xanthosine + phosphate = alpha-D-ribose 1-phosphate + xanthine. Catalyzes the phosphorolysis of diverse nucleosides, yielding D-ribose 1-phosphate and the respective free bases. Can use uridine, adenosine, guanosine, cytidine, thymidine, inosine and xanthosine as substrates. Also catalyzes the reverse reactions. The protein is Pyrimidine/purine nucleoside phosphorylase of Salmonella arizonae (strain ATCC BAA-731 / CDC346-86 / RSK2980).